Consider the following 119-residue polypeptide: MPKAENKKSRAAEIVTREYTINLHKRLHGVGFKKRAPRAVKEIKKFASKIMGTTDVRVDPRLNKFVWNQGIRSVPYRVRVRLARKRNDDEDAKEKLYTLVTYVPVTSFKGLQTQNVDAE.

The protein belongs to the eukaryotic ribosomal protein eL31 family.

This is Large ribosomal subunit protein eL31 (RPL31) from Cyanophora paradoxa.